The primary structure comprises 515 residues: Iroquois-class homeodomain protein IRX-4 (515 aa).

Residues 144 to 205 (GTRRKNATRE…NARRRLKKEN (62 aa)) constitute a DNA-binding region (homeobox; TALE-type). 3 disordered regions span residues 205 to 258 (NKMT…ELEL), 278 to 307 (TPFQSLDSGPERIPASSDGPGTGKEASTTL), and 398 to 425 (GPTGVSATTPASSPAVTAPSGALDRHQD). Positions 214–223 (KCADEKRPYG) are enriched in basic and acidic residues. The span at 224 to 236 (EGEEEEAGEEESR) shows a compositional bias: acidic residues. Residues 237–257 (EEPLKSAKSEGHAGKDDKELE) show a composition bias toward basic and acidic residues. Residues 399–419 (PTGVSATTPASSPAVTAPSGA) are compositionally biased toward low complexity.

Belongs to the TALE/IRO homeobox family. Interacts with the vitamin D receptor VDR but doesn't affect its transactivation activity. As to expression, expressed in the developing central nervous system, skin, and vibrissae, but predominantly expressed in the cardiac ventricles of the developing heart. Not expressed in the developing metanephric kidney or adult kidney.

It localises to the nucleus. Its function is as follows. Likely to be an important mediator of ventricular differentiation during cardiac development. This Mus musculus (Mouse) protein is Iroquois-class homeodomain protein IRX-4 (Irx4).